Consider the following 96-residue polypeptide: Large ribosomal subunit protein bL21 (96 aa).

It belongs to the bacterial ribosomal protein bL21 family. As to quaternary structure, part of the 50S ribosomal subunit. Contacts protein L20.

This protein binds to 23S rRNA in the presence of protein L20. The polypeptide is Large ribosomal subunit protein bL21 (Sulfurihydrogenibium sp. (strain YO3AOP1)).